An 89-amino-acid polypeptide reads, in one-letter code: Ribonuclease P protein component 1 (89 aa).

It belongs to the eukaryotic/archaeal RNase P protein component 1 family. In terms of assembly, consists of a catalytic RNA component and at least 4-5 protein subunits.

The protein resides in the cytoplasm. The enzyme catalyses Endonucleolytic cleavage of RNA, removing 5'-extranucleotides from tRNA precursor.. Functionally, part of ribonuclease P, a protein complex that generates mature tRNA molecules by cleaving their 5'-ends. The sequence is that of Ribonuclease P protein component 1 from Thermoplasma volcanium (strain ATCC 51530 / DSM 4299 / JCM 9571 / NBRC 15438 / GSS1).